The chain runs to 155 residues: Ribosome-binding factor A (155 aa).

Belongs to the RbfA family. As to quaternary structure, monomer. Binds 30S ribosomal subunits, but not 50S ribosomal subunits or 70S ribosomes.

The protein localises to the cytoplasm. Functionally, one of several proteins that assist in the late maturation steps of the functional core of the 30S ribosomal subunit. Associates with free 30S ribosomal subunits (but not with 30S subunits that are part of 70S ribosomes or polysomes). Required for efficient processing of 16S rRNA. May interact with the 5'-terminal helix region of 16S rRNA. This chain is Ribosome-binding factor A, found in Methylocella silvestris (strain DSM 15510 / CIP 108128 / LMG 27833 / NCIMB 13906 / BL2).